We begin with the raw amino-acid sequence, 546 residues long: MMDFGFVDSLKGASKRGKNAVIAEVKVRSPIHGDLLRGRRIEDILRAYEKAGAAAISYITAEQFSGNFETLKKIVGLTDLPVLRKDFIRGRKEVERTAEVEAAALLLIARHLKERTAEMVDFCFEHGIEPLVEVHHAEDLVYAENARAVLINNRDIDRMERDGGSIDVTAKIAEKIRAFKVSGSGIGSVEDLLFVLQYVDAALIGTAFMMAENTEEFVQTVCGGEKMIEDVLRGLDFDKAYELAKTLPELDEIKIAAVLAALEAKGYGAEVIAGFAKGVAEKSKIEIGKVMDTCGTGGDKTSSINVSTAVAIALSTVHPVAKHGNRAVSSKSGSADVLEALGVRIEMDEERARKMIAETNFAFLFAPLYHKSFARVAAVRRNLGIRTIFNVTGPLTNPARPEVQIVGVASEILLVEVAKAMSLLGRRAVVVYGSGMDEVNPNSSTDIAVVNGGVERLKLEPEDFGIERCRVLPCSSSGESAERIRAVFSGKGLKEDRRLIAINFATALFALGYEDLKENVEIFEEKVQSGELARKLEEIACKSTSM.

Residues 1 to 226 (MMDFGFVDSL…FVQTVCGGEK (226 aa)) are indole-3-glycerol phosphate synthase. The interval 227-546 (MIEDVLRGLD…EEIACKSTSM (320 aa)) is anthranilate phosphoribosyltransferase. 5-phospho-alpha-D-ribose 1-diphosphate is bound by residues glycine 295, 298–299 (GD), serine 303, 305–308 (NVST), 322–330 (KHGNRAVSS), and serine 334. Residue glycine 295 participates in anthranilate binding. Mg(2+) is bound at residue serine 307. Anthranilate is bound at residue asparagine 325. Position 380 (arginine 380) interacts with anthranilate. Aspartate 437 and glutamate 438 together coordinate Mg(2+).

It in the N-terminal section; belongs to the TrpC family. In the C-terminal section; belongs to the anthranilate phosphoribosyltransferase family. The cofactor is Mg(2+).

It carries out the reaction 1-(2-carboxyphenylamino)-1-deoxy-D-ribulose 5-phosphate + H(+) = (1S,2R)-1-C-(indol-3-yl)glycerol 3-phosphate + CO2 + H2O. The catalysed reaction is N-(5-phospho-beta-D-ribosyl)anthranilate + diphosphate = 5-phospho-alpha-D-ribose 1-diphosphate + anthranilate. Its pathway is amino-acid biosynthesis; L-tryptophan biosynthesis; L-tryptophan from chorismate: step 2/5. The protein operates within amino-acid biosynthesis; L-tryptophan biosynthesis; L-tryptophan from chorismate: step 4/5. In terms of biological role, bifunctional enzyme that catalyzes the second and fourth steps of tryptophan biosynthetic pathway. The second step is catalyzed by the anthranilate phosphoribosyltransferase, coded by the TrpD domain and the fourth step is catalyzed by indole-3-glycerol phosphate synthase, coded by the TrpC domain. The chain is Tryptophan biosynthesis protein TrpCD (trpCD) from Archaeoglobus fulgidus (strain ATCC 49558 / DSM 4304 / JCM 9628 / NBRC 100126 / VC-16).